The sequence spans 77 residues: Conotoxin Bt6.6 (77 aa).

Positions 1-19 (MEKLTILLLVAAVLMSTQA) are cleaved as a signal peptide. A propeptide spanning residues 20 to 38 (LIQSDGEKRQQAKINFLSX) is cleaved from the precursor. 3 disulfide bridges follow: C51–C65, C58–C69, and C64–C74.

Belongs to the conotoxin O2 superfamily. In terms of tissue distribution, expressed by the venom duct.

It is found in the secreted. This is Conotoxin Bt6.6 from Conus betulinus (Beech cone).